A 110-amino-acid polypeptide reads, in one-letter code: Eukaryotic translation initiation factor eIF1 (110 aa).

Position 40 is a phosphothreonine (Thr-40).

This sequence belongs to the SUI1 family.

Its function is as follows. Probably involved in translation. This is Eukaryotic translation initiation factor eIF1 from Drosophila melanogaster (Fruit fly).